We begin with the raw amino-acid sequence, 844 residues long: Meiosis-specific protein PAIR3 (844 aa).

Disordered stretches follow at residues 41–389, 418–506, 532–604, and 616–669; these read TSSV…RERR, KLSS…RFSD, DDLF…QISI, and WLSD…EPEK. Residues 106 to 120 are compositionally biased toward polar residues; sequence QPDDNAIEQTGTFSF. 2 stretches are compositionally biased toward basic and acidic residues: residues 122-134 and 145-164; these read TRREQDSHLDQLD and RQVESADKNKPNSEMLRMKL. Polar residues-rich tracts occupy residues 191–208 and 218–229; these read QPKSQIANGPSSGRQKVF and TPAQFNSQTANK. Composition is skewed to basic and acidic residues over residues 256–270 and 324–363; these read RKKEPTGSTHQDKSG and AKVEPKKAHCSDRISHKTTQDDMERKVPSKYIPSEKKGEK. Composition is skewed to polar residues over residues 364 to 382 and 420 to 440; these read TNSFSSLSRTGKTAESCSR and SSPQLTSFKSKGKCSSISPQQ. Over residues 441-456 the composition is skewed to basic and acidic residues; sequence KENDNTHIPEASDRTA. The span at 459 to 473 shows a compositional bias: low complexity; it reads NSFNSTPSPAANPSP. Residues 545–554 show a composition bias toward polar residues; sequence RSRSTSFTSD. The segment covering 616 to 640 has biased composition (basic and acidic residues); the sequence is WLSDVDSPDKSSIEHLGRKSHLKEG. Over residues 646–661 the composition is skewed to polar residues; sequence QLTSPTHFATSGTQET. The stretch at 731–765 forms a coiled coil; it reads VNAGKSKRKRLESTFEEQQEKLRILHEKFKEEVNQ.

In terms of tissue distribution, expressed in pollen mother cells and the ovule tissues during meiosis.

Its subcellular location is the chromosome. The protein resides in the nucleus. In terms of biological role, plays a crucial role in homologous chromosome pairing and synapsis in meiosis. Does not seem required for cytokinesis. Is essential for meiotic bouquet formation, homologous chromosome pairing and normal recombination, and synaptonemal complex (SC) assembly. Required for the proper association of PAIR2 with chromosomes. This chain is Meiosis-specific protein PAIR3, found in Oryza sativa subsp. japonica (Rice).